The primary structure comprises 346 residues: Pyrophosphate--fructose 6-phosphate 1-phosphotransferase (346 aa).

Gly13 serves as a coordination point for diphosphate. A Mg(2+)-binding site is contributed by Glu105. Residues 127–129 (TID), Arg164, 171–173 (MGR), Glu224, Arg269, and 275–278 (HLQR) contribute to the substrate site. The active-site Proton acceptor is Asp129.

Belongs to the phosphofructokinase type A (PFKA) family. Mixed-substrate PFK group III subfamily. Homodimer. Mg(2+) serves as cofactor.

The protein localises to the cytoplasm. The enzyme catalyses beta-D-fructose 6-phosphate + diphosphate = beta-D-fructose 1,6-bisphosphate + phosphate + H(+). The protein operates within carbohydrate degradation; glycolysis; D-glyceraldehyde 3-phosphate and glycerone phosphate from D-glucose: step 3/4. Non-allosteric. In terms of biological role, catalyzes the phosphorylation of D-fructose 6-phosphate, the first committing step of glycolysis. Uses inorganic phosphate (PPi) as phosphoryl donor instead of ATP like common ATP-dependent phosphofructokinases (ATP-PFKs), which renders the reaction reversible, and can thus function both in glycolysis and gluconeogenesis. Consistently, PPi-PFK can replace the enzymes of both the forward (ATP-PFK) and reverse (fructose-bisphosphatase (FBPase)) reactions. This is Pyrophosphate--fructose 6-phosphate 1-phosphotransferase from Dictyoglomus thermophilum.